A 376-amino-acid chain; its full sequence is Chaperone protein DnaJ (376 aa).

The J domain occupies 4–69 (DFYETLGVQK…QKRAAYDRFG (66 aa)). The segment at 133–211 (GKTAQIRVPA…CAGQGRVTEE (79 aa)) adopts a CR-type zinc-finger fold. Zn(2+) contacts are provided by C146, C149, C163, C166, C185, C188, C199, and C202. 4 CXXCXGXG motif repeats span residues 146–153 (CTECSGSG), 163–170 (CSMCHGHG), 185–192 (CPQCQGRG), and 199–206 (CPKCAGQG).

The protein belongs to the DnaJ family. As to quaternary structure, homodimer. Requires Zn(2+) as cofactor.

Its subcellular location is the cytoplasm. In terms of biological role, participates actively in the response to hyperosmotic and heat shock by preventing the aggregation of stress-denatured proteins and by disaggregating proteins, also in an autonomous, DnaK-independent fashion. Unfolded proteins bind initially to DnaJ; upon interaction with the DnaJ-bound protein, DnaK hydrolyzes its bound ATP, resulting in the formation of a stable complex. GrpE releases ADP from DnaK; ATP binding to DnaK triggers the release of the substrate protein, thus completing the reaction cycle. Several rounds of ATP-dependent interactions between DnaJ, DnaK and GrpE are required for fully efficient folding. Also involved, together with DnaK and GrpE, in the DNA replication of plasmids through activation of initiation proteins. This Mesorhizobium japonicum (strain LMG 29417 / CECT 9101 / MAFF 303099) (Mesorhizobium loti (strain MAFF 303099)) protein is Chaperone protein DnaJ.